Consider the following 204-residue polypeptide: Peptide deformylase (204 aa).

Fe cation contacts are provided by Cys-131 and His-174. Glu-175 is an active-site residue. His-178 provides a ligand contact to Fe cation.

Belongs to the polypeptide deformylase family. Fe(2+) serves as cofactor.

It carries out the reaction N-terminal N-formyl-L-methionyl-[peptide] + H2O = N-terminal L-methionyl-[peptide] + formate. Functionally, removes the formyl group from the N-terminal Met of newly synthesized proteins. Requires at least a dipeptide for an efficient rate of reaction. N-terminal L-methionine is a prerequisite for activity but the enzyme has broad specificity at other positions. In Streptococcus pyogenes serotype M1, this protein is Peptide deformylase.